We begin with the raw amino-acid sequence, 245 residues long: tRNA (guanine-N(1)-)-methyltransferase (245 aa).

Gly-114 provides a ligand contact to S-adenosyl-L-methionine.

The protein belongs to the RNA methyltransferase TrmD family. In terms of assembly, homodimer.

Its subcellular location is the cytoplasm. The enzyme catalyses guanosine(37) in tRNA + S-adenosyl-L-methionine = N(1)-methylguanosine(37) in tRNA + S-adenosyl-L-homocysteine + H(+). Specifically methylates guanosine-37 in various tRNAs. This Sphingopyxis alaskensis (strain DSM 13593 / LMG 18877 / RB2256) (Sphingomonas alaskensis) protein is tRNA (guanine-N(1)-)-methyltransferase.